The primary structure comprises 624 residues: Membrane protein insertase YidC (624 aa).

The chain crosses the membrane as a helical span at residues 8-28; sequence MIIAIALSLAVLLGWNYFVTA. Residues 36–95 are disordered; sequence QQQAAQVNPSQGVNPSQGVDPSQGVNASPSPKEGGPSAPVPGTLPGAAGGSPQAALARDE. Positions 43–64 are enriched in polar residues; sequence NPSQGVNPSQGVDPSQGVNASP. 5 consecutive transmembrane segments (helical) span residues 370 to 390, 396 to 416, 470 to 490, 526 to 542, and 559 to 579; these read FDLL…FKAL, LFGN…LFFL, WPVL…FVTI, LLHL…TMFL, and FTFM…GLVI.

It belongs to the OXA1/ALB3/YidC family. Type 1 subfamily. Interacts with the Sec translocase complex via SecD. Specifically interacts with transmembrane segments of nascent integral membrane proteins during membrane integration.

Its subcellular location is the cell inner membrane. In terms of biological role, required for the insertion and/or proper folding and/or complex formation of integral membrane proteins into the membrane. Involved in integration of membrane proteins that insert both dependently and independently of the Sec translocase complex, as well as at least some lipoproteins. Aids folding of multispanning membrane proteins. The protein is Membrane protein insertase YidC of Methylobacterium sp. (strain 4-46).